The sequence spans 373 residues: Histidinol-phosphate aminotransferase (373 aa).

Position 230 is an N6-(pyridoxal phosphate)lysine (Lys-230).

Belongs to the class-II pyridoxal-phosphate-dependent aminotransferase family. Histidinol-phosphate aminotransferase subfamily. Homodimer. Pyridoxal 5'-phosphate serves as cofactor.

It catalyses the reaction L-histidinol phosphate + 2-oxoglutarate = 3-(imidazol-4-yl)-2-oxopropyl phosphate + L-glutamate. It participates in amino-acid biosynthesis; L-histidine biosynthesis; L-histidine from 5-phospho-alpha-D-ribose 1-diphosphate: step 7/9. This Synechococcus sp. (strain ATCC 27144 / PCC 6301 / SAUG 1402/1) (Anacystis nidulans) protein is Histidinol-phosphate aminotransferase.